Consider the following 264-residue polypeptide: S-adenosylmethionine decarboxylase proenzyme (264 aa).

The active-site Schiff-base intermediate with substrate; via pyruvic acid is the S112. Position 112 is a pyruvic acid (Ser); by autocatalysis (S112). H117 acts as the Proton acceptor; for processing activity in catalysis. The Proton donor; for catalytic activity role is filled by C140.

Belongs to the prokaryotic AdoMetDC family. Type 2 subfamily. In terms of assembly, heterooctamer of four alpha and four beta chains arranged as a tetramer of alpha/beta heterodimers. Pyruvate serves as cofactor. In terms of processing, is synthesized initially as an inactive proenzyme. Formation of the active enzyme involves a self-maturation process in which the active site pyruvoyl group is generated from an internal serine residue via an autocatalytic post-translational modification. Two non-identical subunits are generated from the proenzyme in this reaction, and the pyruvate is formed at the N-terminus of the alpha chain, which is derived from the carboxyl end of the proenzyme. The post-translation cleavage follows an unusual pathway, termed non-hydrolytic serinolysis, in which the side chain hydroxyl group of the serine supplies its oxygen atom to form the C-terminus of the beta chain, while the remainder of the serine residue undergoes an oxidative deamination to produce ammonia and the pyruvoyl group blocking the N-terminus of the alpha chain.

It catalyses the reaction S-adenosyl-L-methionine + H(+) = S-adenosyl 3-(methylsulfanyl)propylamine + CO2. It functions in the pathway amine and polyamine biosynthesis; S-adenosylmethioninamine biosynthesis; S-adenosylmethioninamine from S-adenosyl-L-methionine: step 1/1. In terms of biological role, catalyzes the decarboxylation of S-adenosylmethionine to S-adenosylmethioninamine (dcAdoMet), the propylamine donor required for the synthesis of the polyamines spermine and spermidine from the diamine putrescine. This chain is S-adenosylmethionine decarboxylase proenzyme, found in Salmonella dublin (strain CT_02021853).